We begin with the raw amino-acid sequence, 209 residues long: Ancillary SecYEG translocon subunit (209 aa).

At 1–23 the chain is on the cytoplasmic side; the sequence is MAAHLEEQQELDNFKYFWKTTGK. Residues 24-42 form a helical membrane-spanning segment; that stretch reads WLFALLILAALGYLGYTVY. The Periplasmic portion of the chain corresponds to 43–209; that stretch reads QNRAASQNQE…LLQMKLDSLK (167 aa). The stretch at 161–194 is one TPR repeat; the sequence is PLLMETKGDVYAAQEKSQEALKNYGQALEKMPQD.

Belongs to the YfgM family. Interacts with the SecYEG translocon. Forms a complex with PpiD.

The protein resides in the cell inner membrane. Its function is as follows. May mediate protein transfer from the SecYEG translocon to the periplasmic chaperone network via its periplasmic C-terminal region. In Neisseria gonorrhoeae (strain ATCC 700825 / FA 1090), this protein is Ancillary SecYEG translocon subunit.